The chain runs to 285 residues: Type II secretion system protein C (285 aa).

Residues M1–H27 are Cytoplasmic-facing. Residues I28–W46 form a helical membrane-spanning segment. The Periplasmic portion of the chain corresponds to K47 to E285.

The protein belongs to the GSP C family.

Its subcellular location is the cell inner membrane. In terms of biological role, involved in a type II secretion system (T2SS, formerly general secretion pathway, GSP) for the export of proteins. Required for the translocation of pullulanase. The sequence is that of Type II secretion system protein C (pulC) from Klebsiella pneumoniae.